A 425-amino-acid polypeptide reads, in one-letter code: Histidine--tRNA ligase (425 aa).

This sequence belongs to the class-II aminoacyl-tRNA synthetase family. In terms of assembly, homodimer.

It is found in the cytoplasm. The enzyme catalyses tRNA(His) + L-histidine + ATP = L-histidyl-tRNA(His) + AMP + diphosphate + H(+). This chain is Histidine--tRNA ligase, found in Streptomyces coelicolor (strain ATCC BAA-471 / A3(2) / M145).